Consider the following 341-residue polypeptide: Glyceraldehyde-3-phosphate dehydrogenase 4 (341 aa).

Residues 13–14 (RI), Asp-35, and Lys-85 contribute to the NAD(+) site. Residues 157-159 (SCT), Thr-188, 217-218 (TG), and Arg-240 contribute to the D-glyceraldehyde 3-phosphate site. Cys-158 (nucleophile) is an active-site residue. Asn-322 is an NAD(+) binding site.

The protein belongs to the glyceraldehyde-3-phosphate dehydrogenase family. Homotetramer.

Its subcellular location is the cytoplasm. The enzyme catalyses D-glyceraldehyde 3-phosphate + phosphate + NAD(+) = (2R)-3-phospho-glyceroyl phosphate + NADH + H(+). It functions in the pathway carbohydrate degradation; glycolysis; pyruvate from D-glyceraldehyde 3-phosphate: step 1/5. In Caenorhabditis elegans, this protein is Glyceraldehyde-3-phosphate dehydrogenase 4 (gpd-4).